The following is a 169-amino-acid chain: Glutathione peroxidase (169 aa).

Sec43 is an active-site residue. A non-standard amino acid (selenocysteine) is located at residue Sec43.

The protein belongs to the glutathione peroxidase family.

The enzyme catalyses 2 glutathione + H2O2 = glutathione disulfide + 2 H2O. The chain is Glutathione peroxidase (GPX1) from Schistosoma mansoni (Blood fluke).